The following is a 243-amino-acid chain: 1-(5-phosphoribosyl)-5-[(5-phosphoribosylamino)methylideneamino] imidazole-4-carboxamide isomerase (243 aa).

Asp8 serves as the catalytic Proton acceptor. The active-site Proton donor is the Asp129.

The protein belongs to the HisA/HisF family.

It is found in the cytoplasm. The enzyme catalyses 1-(5-phospho-beta-D-ribosyl)-5-[(5-phospho-beta-D-ribosylamino)methylideneamino]imidazole-4-carboxamide = 5-[(5-phospho-1-deoxy-D-ribulos-1-ylimino)methylamino]-1-(5-phospho-beta-D-ribosyl)imidazole-4-carboxamide. The protein operates within amino-acid biosynthesis; L-histidine biosynthesis; L-histidine from 5-phospho-alpha-D-ribose 1-diphosphate: step 4/9. The sequence is that of 1-(5-phosphoribosyl)-5-[(5-phosphoribosylamino)methylideneamino] imidazole-4-carboxamide isomerase from Nitratidesulfovibrio vulgaris (strain DSM 19637 / Miyazaki F) (Desulfovibrio vulgaris).